The sequence spans 310 residues: Pyrimidine-specific ribonucleoside hydrolase RihA (310 aa).

His-240 is a catalytic residue.

This sequence belongs to the IUNH family. RihA subfamily.

Hydrolyzes cytidine or uridine to ribose and cytosine or uracil, respectively. This chain is Pyrimidine-specific ribonucleoside hydrolase RihA, found in Photobacterium profundum (strain SS9).